The primary structure comprises 91 residues: DNA-directed RNA polymerase subunit omega (91 aa).

The protein belongs to the RNA polymerase subunit omega family. As to quaternary structure, the RNAP catalytic core consists of 2 alpha, 1 beta, 1 beta' and 1 omega subunit. When a sigma factor is associated with the core the holoenzyme is formed, which can initiate transcription.

The catalysed reaction is RNA(n) + a ribonucleoside 5'-triphosphate = RNA(n+1) + diphosphate. Its function is as follows. Promotes RNA polymerase assembly. Latches the N- and C-terminal regions of the beta' subunit thereby facilitating its interaction with the beta and alpha subunits. This is DNA-directed RNA polymerase subunit omega from Psychromonas ingrahamii (strain DSM 17664 / CCUG 51855 / 37).